A 416-amino-acid chain; its full sequence is Prostate tumor-overexpressed gene 1 protein homolog (416 aa).

Residues 1-53 (MVRPRRAPHRSGAGGPLGGRGRPPRPLVVRAVRSRSWPAGPRGPQPPRIRARS) are disordered. Gly residues predominate over residues 12-21 (GAGGPLGGRG). The span at 27 to 36 (LVVRAVRSRS) shows a compositional bias: low complexity. Phosphoserine is present on serine 53. Residues 184–416 (NGFAGCMLFP…QEQQQRGMGG (233 aa)) are interaction with FLOT1.

Belongs to the Mediator complex subunit 25 family. PTOV1 subfamily. May interact with CREBBP. Interacts with FLOT1. Ubiquitinated by the CRL2(KLHDC2) complex, which recognizes the diglycine (Gly-Gly) at the C-terminus, leading to its degradation. Ubiquitinated by the CRL2(APPBP2) complex, which recognizes the Arg-Xaa-Xaa-Gly sequence at the C-terminus, leading to its degradation.

The protein localises to the cytoplasm. It localises to the nucleus. The protein resides in the cell membrane. Its subcellular location is the perinuclear region. In terms of biological role, may activate transcription. Required for nuclear translocation of FLOT1. Promotes cell proliferation. The chain is Prostate tumor-overexpressed gene 1 protein homolog (Ptov1) from Rattus norvegicus (Rat).